A 217-amino-acid chain; its full sequence is Imidazole glycerol phosphate synthase subunit HisH (217 aa).

In terms of domain architecture, Glutamine amidotransferase type-1 spans 1-212 (MLAILDYKAG…YEYCRQSRQE (212 aa)). C79 (nucleophile) is an active-site residue. Active-site residues include H187 and E189.

Heterodimer of HisH and HisF.

It localises to the cytoplasm. It carries out the reaction 5-[(5-phospho-1-deoxy-D-ribulos-1-ylimino)methylamino]-1-(5-phospho-beta-D-ribosyl)imidazole-4-carboxamide + L-glutamine = D-erythro-1-(imidazol-4-yl)glycerol 3-phosphate + 5-amino-1-(5-phospho-beta-D-ribosyl)imidazole-4-carboxamide + L-glutamate + H(+). The enzyme catalyses L-glutamine + H2O = L-glutamate + NH4(+). It functions in the pathway amino-acid biosynthesis; L-histidine biosynthesis; L-histidine from 5-phospho-alpha-D-ribose 1-diphosphate: step 5/9. In terms of biological role, IGPS catalyzes the conversion of PRFAR and glutamine to IGP, AICAR and glutamate. The HisH subunit catalyzes the hydrolysis of glutamine to glutamate and ammonia as part of the synthesis of IGP and AICAR. The resulting ammonia molecule is channeled to the active site of HisF. The chain is Imidazole glycerol phosphate synthase subunit HisH from Desulfovibrio desulfuricans (strain ATCC 27774 / DSM 6949 / MB).